Consider the following 281-residue polypeptide: Kinetochore-associated protein NSL1 homolog (281 aa).

Phosphoserine is present on S4. A Phosphothreonine modification is found at T244.

As to quaternary structure, component of the MIS12 complex composed of MIS12, DSN1, NSL1/DC8 and PMF1. Interacts with KNL1.

It localises to the nucleus. The protein resides in the chromosome. Its subcellular location is the centromere. The protein localises to the kinetochore. Part of the MIS12 complex which is required for normal chromosome alignment and segregation and kinetochore formation during mitosis. The polypeptide is Kinetochore-associated protein NSL1 homolog (NSL1) (Homo sapiens (Human)).